A 117-amino-acid polypeptide reads, in one-letter code: Probable non-functional immunoglobulinn kappa variable 1-37 (117 aa).

The N-terminal stretch at 1-22 (MDMRVPAQLLGLLLLWVPGARC) is a signal peptide. The Ig-like domain maps to 24–117 (IQLTQSPSSL…YYGQRTYNAP (94 aa)).

Most probably, the immunoglobulin is not assembled due to incorrect folding of light chain. Immunoglobulins are composed of two identical heavy chains and two identical light chains; disulfide-linked.

The protein resides in the secreted. It is found in the cell membrane. Its function is as follows. Probable non-functional open reading frame (ORF) of V region of the variable domain of immunoglobulin light chains. Non-functional ORF generally cannot participate in the synthesis of a productive immunoglobulin chain due to altered V-(D)-J or switch recombination and/or splicing site (at mRNA level) and/or conserved amino acid change (protein level). Immunoglobulins, also known as antibodies, are membrane-bound or secreted glycoproteins produced by B lymphocytes. In the recognition phase of humoral immunity, the membrane-bound immunoglobulins serve as receptors which, upon binding of a specific antigen, trigger the clonal expansion and differentiation of B lymphocytes into immunoglobulins-secreting plasma cells. Secreted immunoglobulins mediate the effector phase of humoral immunity, which results in the elimination of bound antigens. The antigen binding site is formed by the variable domain of one heavy chain, together with that of its associated light chain. Thus, each immunoglobulin has two antigen binding sites with remarkable affinity for a particular antigen. The variable domains are assembled by a process called V-(D)-J rearrangement and can then be subjected to somatic hypermutations which, after exposure to antigen and selection, allow affinity maturation for a particular antigen. In Homo sapiens (Human), this protein is Probable non-functional immunoglobulinn kappa variable 1-37.